The following is a 122-amino-acid chain: Large ribosomal subunit protein uL18 (122 aa).

This sequence belongs to the universal ribosomal protein uL18 family. As to quaternary structure, part of the 50S ribosomal subunit; part of the 5S rRNA/L5/L18/L25 subcomplex. Contacts the 5S and 23S rRNAs.

Functionally, this is one of the proteins that bind and probably mediate the attachment of the 5S RNA into the large ribosomal subunit, where it forms part of the central protuberance. This chain is Large ribosomal subunit protein uL18, found in Leptospira borgpetersenii serovar Hardjo-bovis (strain JB197).